The following is a 297-amino-acid chain: T-cell leukemia homeobox protein 3 (297 aa).

A disordered region spans residues 1-68; the sequence is MEPAAGAQGP…LGGPRGGAPY (68 aa). Positions 32 to 52 are enriched in pro residues; that stretch reads APPPPPPPPPPPPPPPPPPRG. Positions 172-231 form a DNA-binding region, homeobox; that stretch reads RKKPRTSFSRVQICELEKRFHRQKYLASAERAALAKSLKMTDAQVKTWFQNRRTKWRRQT.

As to expression, expression is restricted to neurons in the peripheral and central nervous system.

It is found in the nucleus. Seems to be involved in the development of cranial sensory innervation from peripheral ganglia. In Gallus gallus (Chicken), this protein is T-cell leukemia homeobox protein 3 (TLX3).